We begin with the raw amino-acid sequence, 103 residues long: UPF0473 protein LVIS_1220 (103 aa).

It belongs to the UPF0473 family.

This chain is UPF0473 protein LVIS_1220, found in Levilactobacillus brevis (strain ATCC 367 / BCRC 12310 / CIP 105137 / JCM 1170 / LMG 11437 / NCIMB 947 / NCTC 947) (Lactobacillus brevis).